Consider the following 291-residue polypeptide: MKTGRIVKSISGVYQVDVNGERFNTKPRGLFRKKKFSPVVGDIVEFDVQNINEGYIHQVYERKNELKRPPVSNIDTLVIVMSAVEPNFSTQLLDRFLVIAHSYQLNARILVTKKDKTPIEKQFEINELLKIYENIGYETEFIGNDDDRKKIVEAWSAGLIVLSGQSGVGKSTFLNHYRPELNLETNDISKSLNRGKHTTRHVELFERQNGYIADTPGFSALDFDHIDKDEIKDYFLELNRYGETCKFRNCNHIKEPNCNVKHQLEIGNIAQFRYDHYLQLFNEISNRKVRY.

The CP-type G domain maps to 63–221; it reads KNELKRPPVS…IADTPGFSAL (159 aa). GTP-binding positions include 112–115 and 164–172; these read TKKD and GQSGVGKST. Cysteine 245, cysteine 250, histidine 252, and cysteine 258 together coordinate Zn(2+).

The protein belongs to the TRAFAC class YlqF/YawG GTPase family. RsgA subfamily. In terms of assembly, monomer. Associates with 30S ribosomal subunit, binds 16S rRNA. Zn(2+) serves as cofactor.

It is found in the cytoplasm. Its function is as follows. One of several proteins that assist in the late maturation steps of the functional core of the 30S ribosomal subunit. Helps release RbfA from mature subunits. May play a role in the assembly of ribosomal proteins into the subunit. Circularly permuted GTPase that catalyzes slow GTP hydrolysis, GTPase activity is stimulated by the 30S ribosomal subunit. This is Small ribosomal subunit biogenesis GTPase RsgA from Staphylococcus aureus (strain MRSA252).